An 867-amino-acid polypeptide reads, in one-letter code: Respiratory burst oxidase homolog protein B (867 aa).

The span at 1–13 (MEIENTRDSDSMR) shows a compositional bias: basic and acidic residues. The disordered stretch occupies residues 1-20 (MEIENTRDSDSMRGSRVGFS). Residues 1 to 322 (MEIENTRDSD…DYFIEDNWKR (322 aa)) lie on the Cytoplasmic side of the membrane. Residues Ser82 and Ser97 each carry the phosphoserine; by CPK modification. 2 EF-hand-like regions span residues 141-149 (AVNGMLTKS) and 175-186 (RCITSPAVTKDE). EF-hand domains are found at residues 198–233 (SFDARLQTFFDMVDKDADGRITQEEVKEIISLSASA) and 242–277 (NSDEYAALIMEELDPGNVGYIELYNLETLLLQAPSH). Ca(2+)-binding residues include Asp211, Asp213, Asp215, Arg217, and Glu222. A helical membrane pass occupies residues 323–343 (IWVMALWLSICAGLFTWKFIQ). Residues 344–358 (YKRRAVFDVMGYCVS) lie on the Extracellular side of the membrane. Residues 359–379 (VAKGGAETTKFNMALVLLPVC) form a helical membrane-spanning segment. In terms of domain architecture, Ferric oxidoreductase spans 361–519 (KGGAETTKFN…LFVIVYVLFI (159 aa)). Residues 380-407 (RNTITWLRSRTKLGKIIPFDDNINFHKV) lie on the Cytoplasmic side of the membrane. A helical membrane pass occupies residues 408–428 (IAFGIAVGVGLHAISHLTCDF). Topologically, residues 429–463 (PRLLHATDEEYEPMKPFFGDERPNNYWWFVKGTEG) are extracellular. The chain crosses the membrane as a helical span at residues 464–484 (WTGVVMVVLMIIAYVLAQPWF). The Cytoplasmic portion of the chain corresponds to 485–506 (RRNRLNLPSTIKKLTGFNAFWY). The helical transmembrane segment at 507-527 (SHHLFVIVYVLFIIHGYFLYL) threads the bilayer. Residues 528–686 (SKKWYKKTTW…APAQDYKKYD (159 aa)) are Extracellular-facing. The FAD-binding FR-type domain occupies 558–681 (SGYKAVKILK…DGPYGAPAQD (124 aa)). Residues 687–707 (VVLLVGLGIGATPLISIVKDV) form a helical membrane-spanning segment. Over 708–867 (LNNIKQQKNI…TKFEFHKENF (160 aa)) the chain is Cytoplasmic.

This sequence belongs to the RBOH (TC 5.B.1.3) family. In terms of assembly, monomer and homodimer. In terms of processing, phosphorylation at Ser-82 and Ser-97 is required for full activity of RBOHB. Not phosphorylated at Ser-89. Phosphorylation at Ser-82 is induced by fungal elicitor treatment.

It localises to the cell membrane. Inhibited by diphenylene iodinium (DPI). Its function is as follows. Calcium-dependent NADPH oxidase that generates superoxide. Involved in the massive phase II oxidative burst induced by pathogen infection. This chain is Respiratory burst oxidase homolog protein B (RBOHB), found in Solanum tuberosum (Potato).